We begin with the raw amino-acid sequence, 80 residues long: Diphthamide biosynthesis protein 3 (80 aa).

The DPH-type MB domain maps to 4–60 (FHDEVEIEDFEFDEEKDVYHYPCPCGDRFEIPREMLEMGEDVAQCPSCSLLIRVIYD). Positions 26, 28, 48, and 51 each coordinate Fe cation.

It belongs to the DPH3 family. As to quaternary structure, component of the 2-(3-amino-3-carboxypropyl)histidine synthase complex composed of dph-1, dph-2, dph-3 and a NADH-dependent reductase. Fe(2+) serves as cofactor.

The enzyme catalyses [3Fe-4S](1+)-[protein] + Fe(2+)-[Dph3] = [3Fe-4S](0)-[protein] + Fe(3+)-[Dph3]. It carries out the reaction 2 [3Fe-4S](0)-[protein] + 2 Fe(2+)-[Dph3] + NADH = 2 [4Fe-4S](1+)-[protein] + 2 [Dph3] + NAD(+) + H(+). It functions in the pathway protein modification; peptidyl-diphthamide biosynthesis. In terms of biological role, required for the first step of diphthamide biosynthesis, a post-translational modification of histidine which occurs in elongation factor 2. Dph-1 and dph-2 transfer a 3-amino-3-carboxypropyl (ACP) group from S-adenosyl-L-methionine (SAM) to a histidine residue, the reaction is assisted by a reduction system comprising dph-3 and a NADH-dependent reductase. Acts as an electron donor to reduce the Fe-S cluster in dph1-dph2 keeping the [4Fe-4S] clusters in the active and reduced state. Restores iron to dph-1-dph-2 iron-sulfur clusters which have degraded from [4Fe-4S] to [3Fe-4S] by donating an iron atom to reform [4Fe-4S] clusters, in a manner dependent on the presence of elongation factor 2 and SAM. Associates with the elongator complex and is required for tRNA Wobble base modifications mediated by the elongator complex. The elongator complex is required for multiple tRNA modifications, including mcm5U (5-methoxycarbonylmethyl uridine), mcm5s 2U (5-methoxycarbonylmethyl-2-thiouridine), and ncm5U (5-carbamoylmethyl uridine). The protein is Diphthamide biosynthesis protein 3 of Caenorhabditis elegans.